The primary structure comprises 284 residues: D-tagatose-1,6-bisphosphate aldolase subunit GatY (284 aa).

Asp-82 acts as the Proton donor in catalysis. Residues His-83 and His-180 each coordinate Zn(2+). Residue Gly-181 coordinates dihydroxyacetone phosphate. His-208 is a binding site for Zn(2+). Residues 209–211 and 230–233 contribute to the dihydroxyacetone phosphate site; these read GAS and NVAT.

The protein belongs to the class II fructose-bisphosphate aldolase family. TagBP aldolase GatY subfamily. Forms a complex with GatZ. The cofactor is Zn(2+).

It catalyses the reaction D-tagatofuranose 1,6-bisphosphate = D-glyceraldehyde 3-phosphate + dihydroxyacetone phosphate. It participates in carbohydrate metabolism; D-tagatose 6-phosphate degradation; D-glyceraldehyde 3-phosphate and glycerone phosphate from D-tagatose 6-phosphate: step 2/2. Its function is as follows. Catalytic subunit of the tagatose-1,6-bisphosphate aldolase GatYZ, which catalyzes the reversible aldol condensation of dihydroxyacetone phosphate (DHAP or glycerone-phosphate) with glyceraldehyde 3-phosphate (G3P) to produce tagatose 1,6-bisphosphate (TBP). Requires GatZ subunit for full activity and stability. Is involved in the catabolism of galactitol. The polypeptide is D-tagatose-1,6-bisphosphate aldolase subunit GatY (Salmonella newport (strain SL254)).